Reading from the N-terminus, the 95-residue chain is Acylphosphatase (95 aa).

In terms of domain architecture, Acylphosphatase-like spans 8–95; that stretch reads RAKILVRGKV…GNFRTFEIKK (88 aa). Active-site residues include Arg23 and Asn41.

The protein belongs to the acylphosphatase family.

The enzyme catalyses an acyl phosphate + H2O = a carboxylate + phosphate + H(+). In Leptospira interrogans serogroup Icterohaemorrhagiae serovar copenhageni (strain Fiocruz L1-130), this protein is Acylphosphatase (acyP).